The following is a 194-amino-acid chain: dCTP deaminase, dUMP-forming (194 aa).

Residues 104 to 109, Asp122, 130 to 132, Gln151, Tyr165, Lys172, and Gln176 contribute to the dCTP site; these read RSSLGR and TLE. The active-site Proton donor/acceptor is the Glu132.

It belongs to the dCTP deaminase family. In terms of assembly, homotrimer.

The enzyme catalyses dCTP + 2 H2O = dUMP + NH4(+) + diphosphate. The protein operates within pyrimidine metabolism; dUMP biosynthesis; dUMP from dCTP: step 1/1. Its function is as follows. Bifunctional enzyme that catalyzes both the deamination of dCTP to dUTP and the hydrolysis of dUTP to dUMP without releasing the toxic dUTP intermediate. The sequence is that of dCTP deaminase, dUMP-forming from Dictyoglomus turgidum (strain DSM 6724 / Z-1310).